Consider the following 282-residue polypeptide: Bacterial lipoprotein FTN_1103 (282 aa).

An N-terminal signal peptide occupies residues 1 to 28; it reads MKYGNLMMTKKKLLIGMVTISGIVILGS. Cys29 carries N-palmitoyl cysteine lipidation. Residue Cys29 is the site of S-diacylglycerol cysteine attachment.

It localises to the cell membrane. Stimulates the host immune inflammatory signaling system allowing the host to combat the bacteria. Stimulates mouse interleukin-6 (Il6) production. This Francisella tularensis subsp. novicida (strain U112) protein is Bacterial lipoprotein FTN_1103.